Here is an 85-residue protein sequence, read N- to C-terminus: Arminin 2b (85 aa).

The N-terminal stretch at 1–18 (MKTVFAILFLAFIALTYA) is a signal peptide. The propeptide occupies 19-57 (RSYEDVKEEIKNEIEKEILEDLEEESDELNDKSKEINDA). Position 82 is an alanine amide (Ala82).

The protein belongs to the arminin family. As to expression, expressed in entodermal epithelium along the body column.

The protein resides in the secreted. The protein localises to the target cell membrane. Functionally, antimicrobial peptide with a broad-spectrum antimicrobial activity. Keeps its antibacterial activity under a wide range of salt concentrations that mimic physiological conditions of human blood, which is surprising, since Hydra is an obligate freshwater animal with nearly no salt tolerance. Does not affect red blood cells. The sequence is that of Arminin 2b from Hydra vulgaris (Hydra).